The primary structure comprises 412 residues: Cytochrome P450-SOY (412 aa).

A compositionally biased stretch (polar residues) spans 1–25; sequence MTESTTDPARQNLDPTSPAPATSFP. Residues 1 to 38 form a disordered region; the sequence is MTESTTDPARQNLDPTSPAPATSFPQDRGCPYHPPAGY. Cysteine 361 provides a ligand contact to heme.

This sequence belongs to the cytochrome P450 family. Heme serves as cofactor.

Its subcellular location is the cytoplasm. This Streptomyces griseus protein is Cytochrome P450-SOY (cyp105D1).